The primary structure comprises 463 residues: Nitrogenase iron-molybdenum cofactor biosynthesis protein NifE (463 aa).

This sequence belongs to the NifD/NifK/NifE/NifN family.

Its pathway is cofactor biosynthesis; Fe-Mo cofactor biosynthesis. This protein may play a role in the biosynthesis of the prosthetic group of nitrogenase (FeMo cofactor). This Methanosarcina barkeri protein is Nitrogenase iron-molybdenum cofactor biosynthesis protein NifE (nifE2).